Consider the following 480-residue polypeptide: UDP-N-acetylmuramate--L-alanine ligase (480 aa).

An ATP-binding site is contributed by 129 to 135 (GTHGKTT).

The protein belongs to the MurCDEF family.

It is found in the cytoplasm. It catalyses the reaction UDP-N-acetyl-alpha-D-muramate + L-alanine + ATP = UDP-N-acetyl-alpha-D-muramoyl-L-alanine + ADP + phosphate + H(+). It functions in the pathway cell wall biogenesis; peptidoglycan biosynthesis. Its function is as follows. Cell wall formation. The sequence is that of UDP-N-acetylmuramate--L-alanine ligase from Mannheimia succiniciproducens (strain KCTC 0769BP / MBEL55E).